A 693-amino-acid chain; its full sequence is Zinc finger protein 441 (693 aa).

A KRAB domain is found at 4-79; it reads VAFEDVAINF…ERACEIKDNS (76 aa). A C2H2-type 1 zinc finger spans residues 169–190; that stretch reads YDCKECASFSSLENLQRHMAAH. The C2H2-type 2; degenerate zinc-finger motif lies at 196-218; it reads RICKLCGNAFIWPSLFHMLRRTH. The C2H2-type 3; degenerate zinc-finger motif lies at 224–246; it reads YEYEQCSTAFPAYSSTLRHERTH. The C2H2-type 4; degenerate zinc-finger motif lies at 252–274; that stretch reads YQCKQCGKAFSCSCYTQLYERTH. C2H2-type zinc fingers lie at residues 280 to 302, 308 to 330, 336 to 358, 364 to 386, 392 to 413, 419 to 441, 447 to 469, 475 to 497, 503 to 525, 531 to 553, 559 to 581, 587 to 609, 615 to 637, 643 to 665, and 671 to 693; these read YECKQCGKAFYHLGSFQRHMIVH, HKCKICGKGFLSPSSVRRHKRTH, YECKYCGKAFSDCTGFRRHMITH, HKCKVCGKAFDSPSLCRRHETTH, YKCECGKAFSDFYYFRNHETTH, YKCKQCGKAFICCTYLQIHERIH, YKCKQCGKAFRSSNYIRVHEKTH, YECKQCGKALSHLKSFQRHMIMH, HKCKICGKSFDSPSSFRRHERIH, YKCKLCGKGFRSSSYIQLHERTH, YGCQQCGKALSDLSSFRRHMITH, HKCKICGKGFDYPSSVQRHERTH, YECKECGKAFSHSSYLRIHERVH, YKCKECGKPFHCPSAFHKHERTH, and YKCKECGEAFHCISSFHKHEMTH.

The protein belongs to the krueppel C2H2-type zinc-finger protein family.

Its subcellular location is the nucleus. In terms of biological role, may be involved in transcriptional regulation. In Homo sapiens (Human), this protein is Zinc finger protein 441 (ZNF441).